We begin with the raw amino-acid sequence, 609 residues long: ATP-dependent lipid A-core flippase (609 aa).

6 consecutive transmembrane segments (helical) span residues 47–67, 88–108, 167–187, 190–210, 279–299, and 305–325; these read LLAA…IYLI, ILML…VGSF, AIIT…VMFV, WQLS…ISII, VIQI…AIFG, and GSSW…AAIL. An ABC transmembrane type-1 domain is found at 47–340; the sequence is LLAAIGSIFF…LTKVNVVIQK (294 aa). Residues 372 to 606 form the ABC transporter domain; the sequence is VTIKDLSFAF…GGLYTRLYQS (235 aa). 404–411 is an ATP binding site; it reads GKSGSGKT.

Belongs to the ABC transporter superfamily. Lipid exporter (TC 3.A.1.106) family. In terms of assembly, homodimer.

The protein resides in the cell inner membrane. The catalysed reaction is ATP + H2O + lipid A-core oligosaccharideSide 1 = ADP + phosphate + lipid A-core oligosaccharideSide 2.. Its function is as follows. Involved in lipopolysaccharide (LPS) biosynthesis. Translocates lipid A-core from the inner to the outer leaflet of the inner membrane. Transmembrane domains (TMD) form a pore in the inner membrane and the ATP-binding domain (NBD) is responsible for energy generation. The chain is ATP-dependent lipid A-core flippase from Francisella tularensis subsp. holarctica (strain LVS).